We begin with the raw amino-acid sequence, 510 residues long: MEALSMVGSGGVYSWPAALLVAAIVVSASVRWWGIKRQPTTTESKARLPRGSLGWPVVGETLAFISAAYSAQPESFVDKRRLLYGKVFKSHLWGSKAVVSSDAEVSRAVLQADASAFVPWYPSSLMQLMGESSILVLGGGLQRRVHGLAGAFFKSPQLKARLTVDMQRRVADAMDAWQCHGVVRVQDEAKSIVFEILVKALIGLEPGQEMHYLKQQFREFIAGLISLPIKLPGTQLYRSIQAKKRMAKLIQKIVQEKREKRMGGNNNATCKAPRDMIDVLMSNGSEELTDELISDNMIDFMIPAEDSVPVLITLAVKYLSECPLALEQLEEENMELKKRKSAVGGTLEWTDYMSLAFTQHVITETLRIGNIINGIMRKAVKDVEVKGQLLIPQGWCVFLYFRSVHLDGHIYDDPYAFNPWRWKERDMMAASSGFTPFGGGQRLCPGVDLARLEASIFLHHLVTTFRWEAEDDTVVTFPTVRLKRGMPIRVSQNIETSGTATFRSTESASV.

Residues 6–26 traverse the membrane as a helical segment; that stretch reads MVGSGGVYSWPAALLVAAIVV. Heme is bound at residue C444.

It belongs to the cytochrome P450 family. Requires heme as cofactor.

The protein localises to the membrane. It carries out the reaction 3-epi-6-deoxocathasterone + reduced [NADPH--hemoprotein reductase] + O2 = 6-deoxotyphasterol + oxidized [NADPH--hemoprotein reductase] + H2O + H(+). The enzyme catalyses (22S,24R)-22-hydroxy-5alpha-ergostan-3-one + reduced [NADPH--hemoprotein reductase] + O2 = 3-dehydro-6-deoxoteasterone + oxidized [NADPH--hemoprotein reductase] + H2O + H(+). It catalyses the reaction 6-deoxycathasterone + reduced [NADPH--hemoprotein reductase] + O2 = 6-deoxoteasterone + oxidized [NADPH--hemoprotein reductase] + H2O + H(+). The protein operates within plant hormone biosynthesis; brassinosteroid biosynthesis. Its function is as follows. Involved in reduction steps of the biosynthesis of plant campesterol-derivative steroids, ending to castasterone (CS) but missing brassinolide (BL). Catalyzes the conversion of (22S,24R)-22-hydroxy-5alpha-ergostan-3-one (22-hydroxy-campesta-3-one, 22-OH-3-one) to 3-dehydro-6-deoxoteasterone (6-deoxo3DT, 6-deoxo-3-DHT), 3-epi-6-deoxocathasterone (3-epi-6-deoxoCT) to 6-deoxotyphasterol (6-deoxoTY) and of 6-deoxocathasterone (6-deoxoCT) to 6-deoxoteasterone (6-deoxoTE). The chain is Cytochrome P450 90D2 from Brachypodium distachyon (Purple false brome).